We begin with the raw amino-acid sequence, 176 residues long: Large ribosomal subunit protein uL6 (176 aa).

This sequence belongs to the universal ribosomal protein uL6 family. As to quaternary structure, part of the 50S ribosomal subunit.

In terms of biological role, this protein binds to the 23S rRNA, and is important in its secondary structure. It is located near the subunit interface in the base of the L7/L12 stalk, and near the tRNA binding site of the peptidyltransferase center. This chain is Large ribosomal subunit protein uL6, found in Paraburkholderia phytofirmans (strain DSM 17436 / LMG 22146 / PsJN) (Burkholderia phytofirmans).